The primary structure comprises 1028 residues: Sporulation-specific protein 3 (1028 aa).

The protein resides in the prospore membrane. In terms of biological role, has a role in spore morphogenesis. Involved in the assembly of the forespore membrane. The protein is Sporulation-specific protein 3 (spo3) of Schizosaccharomyces pombe (strain 972 / ATCC 24843) (Fission yeast).